A 382-amino-acid polypeptide reads, in one-letter code: Homoserine O-succinyltransferase (382 aa).

An AB hydrolase-1 domain is found at 51–359; it reads NAVLICHALS…DAPWGHDAFL (309 aa). Ser-157 serves as the catalytic Nucleophile. Arg-227 contributes to the substrate binding site. Catalysis depends on residues Asp-322 and His-355. Residue Asp-356 participates in substrate binding.

It belongs to the AB hydrolase superfamily. MetX family. In terms of assembly, homodimer.

It is found in the cytoplasm. The enzyme catalyses L-homoserine + succinyl-CoA = O-succinyl-L-homoserine + CoA. It functions in the pathway amino-acid biosynthesis; L-methionine biosynthesis via de novo pathway; O-succinyl-L-homoserine from L-homoserine: step 1/1. Functionally, transfers a succinyl group from succinyl-CoA to L-homoserine, forming succinyl-L-homoserine. The protein is Homoserine O-succinyltransferase of Marinobacter nauticus (strain ATCC 700491 / DSM 11845 / VT8) (Marinobacter aquaeolei).